Reading from the N-terminus, the 285-residue chain is Protein FD (285 aa).

A compositionally biased stretch (basic residues) spans 1-12 (MLSSAKHQRNHR). Disordered stretches follow at residues 1-59 (MLSS…QKRS), 79-107 (NRHS…NSIF), 115-134 (LNQE…NGDS), 198-236 (SSSF…ARKQ), and 257-285 (KRQQ…TAPF). The span at 13–25 (LSATNKNQTLTKV) shows a compositional bias: polar residues. Positions 26-50 (SSISSSSPSSSSSSSSTSSSSPLPS) are enriched in low complexity. Over residues 98–107 (HHNQNPNSIF) the composition is skewed to polar residues. Residues 214 to 277 (GNRRHKRMIK…AIQQPKKNTL (64 aa)) form the bZIP domain. The basic motif stretch occupies residues 216–235 (RRHKRMIKNRESAARSRARK). Positions 242-263 (LELEVAHLQAENARLKRQQDQL) are leucine-zipper. Residues 272–285 (PKKNTLQRSSTAPF) are compositionally biased toward polar residues. Thr282 is modified (phosphothreonine).

It belongs to the bZIP family. In terms of assembly, self-interacts. Interacts with FT and FDP/BZIP27. Interacts with GRF3 and GRF4, and in a calcium-independent manner, with CPK6 and CPK33. Post-translationally, phosphorylated at Thr-282 in a calcium-dependent manner by CPK6 and CPK33. Highly expressed in shoot apex.

It localises to the nucleus. In terms of biological role, transcription factor required for the transition to flowering promoted by FT. This Arabidopsis thaliana (Mouse-ear cress) protein is Protein FD.